A 316-amino-acid polypeptide reads, in one-letter code: Endochitinase 2 (316 aa).

An N-terminal signal peptide occupies residues 1-18 (EFTTLFLLFSVLLLSASA). One can recognise a Chitin-binding type-1 domain in the interval 19 to 60 (EQCGSQAGGALCASGLCCSKFGWCGNTNDYCGPGNCQSQCPG). 7 cysteine pairs are disulfide-bonded: C21-C36, C30-C42, C35-C49, C54-C58, C87-C150, C162-C170, and C269-C301. The active-site Proton donor is the E132. Positions 310 to 316 (GLLVDTV) are cleaved as a propeptide — removed in mature form, vacuolar targeting.

Belongs to the glycosyl hydrolase 19 family. Chitinase class I subfamily.

It localises to the vacuole. It catalyses the reaction Random endo-hydrolysis of N-acetyl-beta-D-glucosaminide (1-&gt;4)-beta-linkages in chitin and chitodextrins.. In terms of biological role, defense against chitin-containing fungal pathogens. This chain is Endochitinase 2 (CHTB2), found in Solanum tuberosum (Potato).